We begin with the raw amino-acid sequence, 288 residues long: Acetyl-coenzyme A carboxylase carboxyl transferase subunit beta (288 aa).

The CoA carboxyltransferase N-terminal domain maps to 34 to 288 (LFAKCPACKH…HLVAFHGGGQ (255 aa)). Zn(2+) is bound by residues Cys38, Cys41, Cys56, and Cys59. The segment at 38–59 (CPACKHMIYKKDLGLAKICPTC) adopts a C4-type zinc-finger fold.

Belongs to the AccD/PCCB family. In terms of assembly, acetyl-CoA carboxylase is a heterohexamer composed of biotin carboxyl carrier protein (AccB), biotin carboxylase (AccC) and two subunits each of ACCase subunit alpha (AccA) and ACCase subunit beta (AccD). Requires Zn(2+) as cofactor.

Its subcellular location is the cytoplasm. It carries out the reaction N(6)-carboxybiotinyl-L-lysyl-[protein] + acetyl-CoA = N(6)-biotinyl-L-lysyl-[protein] + malonyl-CoA. It functions in the pathway lipid metabolism; malonyl-CoA biosynthesis; malonyl-CoA from acetyl-CoA: step 1/1. In terms of biological role, component of the acetyl coenzyme A carboxylase (ACC) complex. Biotin carboxylase (BC) catalyzes the carboxylation of biotin on its carrier protein (BCCP) and then the CO(2) group is transferred by the transcarboxylase to acetyl-CoA to form malonyl-CoA. The polypeptide is Acetyl-coenzyme A carboxylase carboxyl transferase subunit beta (Streptococcus pyogenes serotype M6 (strain ATCC BAA-946 / MGAS10394)).